The chain runs to 407 residues: Aurora kinase A-A (407 aa).

Residues 1–10 (MERAVKENHK) are compositionally biased toward basic and acidic residues. Positions 1 to 130 (MERAVKENHK…KTSAVPKEEG (130 aa)) are disordered. Composition is skewed to polar residues over residues 67-77 (ILSSQKPTTQI) and 84-110 (QGHQ…STPN). The Protein kinase domain occupies 140–390 (FEIGRPLGKG…LKGVLEHPWI (251 aa)). Residues Lys-150, Lys-169, and 217–220 (LDYA) each bind ATP. Residue Asp-263 is the Proton acceptor of the active site. Residue Asp-281 coordinates ATP. The tract at residues 287–300 (HAPSSRRTTLCGTL) is activation segment.

This sequence belongs to the protein kinase superfamily. Ser/Thr protein kinase family. Aurora subfamily. In terms of assembly, interacts with kif2c and kif11. In terms of processing, phosphorylated. Autophosphorylated on a serine residue. As to expression, highly expressed in ovary and testis.

The protein resides in the cytoplasm. It is found in the cytoskeleton. It localises to the spindle. Its subcellular location is the microtubule organizing center. The protein localises to the centrosome. It carries out the reaction L-seryl-[protein] + ATP = O-phospho-L-seryl-[protein] + ADP + H(+). The catalysed reaction is L-threonyl-[protein] + ATP = O-phospho-L-threonyl-[protein] + ADP + H(+). Functionally, mitotic serine/threonine kinases that contributes to the regulation of cell cycle progression. Associates with the centrosome and the spindle microtubules during mitosis and plays a critical role in various mitotic events including the establishment of mitotic spindle, centrosome duplication, centrosome separation as well as maturation, chromosomal alignment, spindle assembly checkpoint, and cytokinesis. Phosphorylates numerous target proteins. Important for microtubule formation and/or stabilization. This chain is Aurora kinase A-A (aurka-a), found in Xenopus laevis (African clawed frog).